A 428-amino-acid polypeptide reads, in one-letter code: Serine--tRNA ligase (428 aa).

Position 231–233 (231–233 (TAE)) interacts with L-serine. 262–264 (RSE) lines the ATP pocket. Glu-285 serves as a coordination point for L-serine. Position 349 to 352 (349 to 352 (EISS)) interacts with ATP. Ser-385 contacts L-serine.

It belongs to the class-II aminoacyl-tRNA synthetase family. Type-1 seryl-tRNA synthetase subfamily. As to quaternary structure, homodimer. The tRNA molecule binds across the dimer.

The protein resides in the cytoplasm. It catalyses the reaction tRNA(Ser) + L-serine + ATP = L-seryl-tRNA(Ser) + AMP + diphosphate + H(+). The enzyme catalyses tRNA(Sec) + L-serine + ATP = L-seryl-tRNA(Sec) + AMP + diphosphate + H(+). The protein operates within aminoacyl-tRNA biosynthesis; selenocysteinyl-tRNA(Sec) biosynthesis; L-seryl-tRNA(Sec) from L-serine and tRNA(Sec): step 1/1. Catalyzes the attachment of serine to tRNA(Ser). Is also able to aminoacylate tRNA(Sec) with serine, to form the misacylated tRNA L-seryl-tRNA(Sec), which will be further converted into selenocysteinyl-tRNA(Sec). In Staphylococcus carnosus (strain TM300), this protein is Serine--tRNA ligase.